The following is a 346-amino-acid chain: Oxidoreductase calI (346 aa).

Positions Val11 to Pro33 are disordered. Over residues Gly18–Asp32 the composition is skewed to basic and acidic residues. NADP(+) is bound by residues Leu52, Lys76, Asp100, and Asn128. Catalysis depends on Ser181, which acts as the Proton donor. The NADP(+) site is built by Tyr208, Lys212, and Ile241. The active-site Proton acceptor is the Tyr208. Residue Lys212 is the Lowers pKa of active site Tyr of the active site.

It belongs to the short-chain dehydrogenases/reductases (SDR) family.

It participates in secondary metabolite biosynthesis. Oxidoreductase; part of the gene cluster that mediates the biosynthesis of calbistrin A and related compounds. Calbistrin A is a secondary metabolite with an interesting structure that was recently found to have bioactivity against leukemia cells. It consists of two polyketides linked by an ester bond: a bicyclic decalin containing polyketide and a linear 12 carbon dioic acid structure. The polyketide synthase calA is probably responsible for forming the decalin moiety. Because calA lacks a designated enoylreductase (ER) domain, the required activity is provided by the trans-enoyl reductase calK. Following release from the PKS, calF then probably catalyzes the oxidation and the subsequent Diels Alder cycloisomerization that lead to the formation of the decalin moiety. The decalin polyketide backbone includes two C-methyl groups, at C7 and C11 in backbone, of which the C7 position is probably methylated by the methyltransferase domain of calA. A candidate for adding the methyl group at C11, if not done by CalA, is the cluster methyltransferase calH. Several additional tailoring enzymes within the cluster could be involved in the modification of the decalin polyketide product. Those include the 3 cytochrome P450 monooxygenases CalE, CalG and CalL, of which one might be responsible for the introduction of the extra hydroxyl group attached to the backbone of the decalin moiety, at position C9 in the backbone, that allows for attachment of the linear moiety. One tailoring enzyme activity that is expected to be involved in biosynthesis of calbistrin is an acyltransferase for connecting the two polyketide synthase products, and which could be performed by the cluster acyltransferase calJ. The enzyme responsible for the biosynthesis of the linear moiety, probably a second PKS, has not been identified yet. The chain is Oxidoreductase calI from Penicillium decumbens.